The following is a 332-amino-acid chain: 3-ketodihydrosphingosine reductase (332 aa).

Positions 1–25 (MLLLAAASLVAFVLLLYMVSPLISP) are cleaved as a signal peptide. Residues 26–269 (KPLALPGAHV…QGNFNSSIGS (244 aa)) are Cytoplasmic-facing. NADPH-binding residues include Gly39, Ser41, Ser42, Gly43, Arg64, Lys68, and Asp93. The short motif at 39–43 (GGSSG) is the GXSXG element. Catalysis depends on Ser172, which acts as the Proton donor. The active-site Proton acceptor is Tyr186. Residues Tyr186 and Lys190 each coordinate NADP(+). The active-site Lowers pKa of active site Tyr is the Lys190. A helical membrane pass occupies residues 270-290 (DGYMLSSLTCGMAPVTSIMEG). At 291–292 (LQ) the chain is on the lumenal side. Residues 293 to 313 (QVVTMGLFRTIALFYLGSFDS) form a helical membrane-spanning segment. The Cytoplasmic portion of the chain corresponds to 314–331 (IVRRCMMQKAKLETVDKT).

This sequence belongs to the short-chain dehydrogenases/reductases (SDR) family.

Its subcellular location is the endoplasmic reticulum membrane. The enzyme catalyses sphinganine + NADP(+) = 3-oxosphinganine + NADPH + H(+). It functions in the pathway lipid metabolism; sphingolipid metabolism. Its function is as follows. Catalyzes the reduction of 3'-oxosphinganine (3-ketodihydrosphingosine/KDS) to sphinganine (dihydrosphingosine/DHS), the second step of de novo sphingolipid biosynthesis. In Bos taurus (Bovine), this protein is 3-ketodihydrosphingosine reductase (KDSR).